Here is a 552-residue protein sequence, read N- to C-terminus: Rqc2 homolog RqcH (552 aa).

Coiled coils occupy residues 271 to 317 (RDRV…QKGE) and 357 to 398 (NAQR…MLGQ).

This sequence belongs to the NEMF family. In terms of assembly, associates with stalled 50S ribosomal subunits, binds to RqcH. Recombinant protein interacts with the N-terminal 30 kDa of human fibronectin (FN1).

In terms of biological role, key component of the ribosome quality control system (RQC), a ribosome-associated complex that mediates the extraction of incompletely synthesized nascent chains from stalled ribosomes and their subsequent degradation. RqcH recruits Ala-charged tRNA, and with RqcP directs the elongation of stalled nascent chains on 50S ribosomal subunits, leading to non-templated C-terminal alanine extensions (Ala tail). The Ala tail promotes nascent chain degradation. May add between 1 and at least 8 Ala residues. Binds to stalled 50S ribosomal subunits. The sequence is that of Rqc2 homolog RqcH from Streptococcus suis (strain 05ZYH33).